The following is a 310-amino-acid chain: uncharacterized protein (310 aa).

Disordered stretches follow at residues 1 to 53 (MSNK…NKEM), 78 to 127 (PIEN…TITN), and 153 to 217 (QQPL…SQML). Residues 11–25 (GEEDEEEDDLYDDYD) show a composition bias toward acidic residues. Polar residues-rich tracts occupy residues 37 to 49 (STSMNKSDSNISL) and 78 to 88 (PIENINENPSP). Composition is skewed to low complexity over residues 94 to 126 (QTQQTQPQQNPISPITPLSSSSPSSSTTTTTIT), 164 to 184 (PSPIILQHQQQQQPLQSQYIT), and 192 to 208 (YQPIASQQSQQPQQIPT). A coiled-coil region spans residues 268–299 (DLIKSVQHNIRQYNDDILTLEEKLEQTEWSLQ).

This is an uncharacterized protein from Dictyostelium discoideum (Social amoeba).